A 359-amino-acid chain; its full sequence is Nicotinate-nucleotide--dimethylbenzimidazole phosphoribosyltransferase (359 aa).

The active-site Proton acceptor is Glu-318.

It belongs to the CobT family. In terms of assembly, homodimer.

It carries out the reaction 5,6-dimethylbenzimidazole + nicotinate beta-D-ribonucleotide = alpha-ribazole 5'-phosphate + nicotinate + H(+). Its pathway is nucleoside biosynthesis; alpha-ribazole biosynthesis; alpha-ribazole from 5,6-dimethylbenzimidazole: step 1/2. In terms of biological role, catalyzes the synthesis of alpha-ribazole-5'-phosphate from nicotinate mononucleotide (NAMN) and 5,6-dimethylbenzimidazole (DMB). The polypeptide is Nicotinate-nucleotide--dimethylbenzimidazole phosphoribosyltransferase (Escherichia coli (strain ATCC 8739 / DSM 1576 / NBRC 3972 / NCIMB 8545 / WDCM 00012 / Crooks)).